The sequence spans 213 residues: MTDFRQDFLKFSLAQNVLKFGEFTTKAGRRSPYFFNAGLFNDGASTLQLAKFYAQSIIESGIRFDMLFGPAYKGIILAAATAMMLAEKGVNVPFAYNRKEAKDRGEGGVLVGAPLKGRVLIIDDVISAGTSVRESIKLIEAEGATPAGVAIALDRMEKGTGKLSAVQEVEKQYGLPVAPIASLNDLFILLQNNPEFGQFLEPVRTYRRQYGVE.

K26 contacts 5-phospho-alpha-D-ribose 1-diphosphate. Position 34–35 (34–35 (FF)) interacts with orotate. Residues 72-73 (YK), R98, K99, K102, and 123-131 (DDVISAGTS) each bind 5-phospho-alpha-D-ribose 1-diphosphate. Positions 127 and 155 each coordinate orotate.

It belongs to the purine/pyrimidine phosphoribosyltransferase family. PyrE subfamily. As to quaternary structure, homodimer. The cofactor is Mg(2+).

The catalysed reaction is orotidine 5'-phosphate + diphosphate = orotate + 5-phospho-alpha-D-ribose 1-diphosphate. The protein operates within pyrimidine metabolism; UMP biosynthesis via de novo pathway; UMP from orotate: step 1/2. Catalyzes the transfer of a ribosyl phosphate group from 5-phosphoribose 1-diphosphate to orotate, leading to the formation of orotidine monophosphate (OMP). The sequence is that of Orotate phosphoribosyltransferase from Neisseria gonorrhoeae (strain ATCC 700825 / FA 1090).